Reading from the N-terminus, the 532-residue chain is 2,3-bisphosphoglycerate-independent phosphoglycerate mutase (532 aa).

Positions 15 and 65 each coordinate Mn(2+). The Phosphoserine intermediate role is filled by Ser-65. Substrate contacts are provided by residues His-126, 156-157 (RD), Arg-188, Arg-194, 258-261 (RPDR), and Lys-331. Residues Asp-398, His-402, Asp-439, His-440, and His-457 each coordinate Mn(2+).

The protein belongs to the BPG-independent phosphoglycerate mutase family. Monomer. Requires Mn(2+) as cofactor.

The catalysed reaction is (2R)-2-phosphoglycerate = (2R)-3-phosphoglycerate. The protein operates within carbohydrate degradation; glycolysis; pyruvate from D-glyceraldehyde 3-phosphate: step 3/5. Its function is as follows. Catalyzes the interconversion of 2-phosphoglycerate and 3-phosphoglycerate. The chain is 2,3-bisphosphoglycerate-independent phosphoglycerate mutase from Trichodesmium erythraeum (strain IMS101).